A 220-amino-acid polypeptide reads, in one-letter code: Splicing factor U2AF 26 kDa subunit (220 aa).

Alanine 2 carries the N-acetylalanine modification. The C3H1-type 1 zinc finger occupies 12-40 (EKDKVNCSFYFKIGACRHGDRCSRLHNKP). Positions 65-147 (SHCHVSDVEV…QAVHAELSPV (83 aa)) constitute an RRM domain. A C3H1-type 2 zinc finger spans residues 149 to 176 (DFRESCCRQYEMGECTRGGFCNFMHLRP). Positions 186-220 (YGRGPRHRSPPRSHTGHRPRERNRRRSPDHRHGRF) are disordered. The span at 189–220 (GPRHRSPPRSHTGHRPRERNRRRSPDHRHGRF) shows a compositional bias: basic residues.

It belongs to the splicing factor SR family. Interacts with GFI1, U2AF2 and C1QBP. Isoform 3 interacts with PER1. Post-translationally, isoform 3 is rapidly degraded by a proteasome-mediated degradation pathway. In terms of tissue distribution, ubiquitous. Highly expressed in the brain.

It localises to the nucleus. The protein localises to the nucleus speckle. It is found in the cytoplasm. RNA-binding protein that function as a pre-mRNA splicing factor. Plays a critical role in both constitutive and enhancer-dependent splicing by mediating protein-protein interactions and protein-RNA interactions required for accurate 3'-splice site selection. It can functionally substitute for U2AF1 in constitutive splicing and enhancer-dependent splicing. Acts by enhancing the binding of U2AF2 to weak pyrimidine tracts. Also participates in the regulation of alternative pre-mRNA splicing. Activates exon 5 skipping of PTPRC during T-cell activation; an event reversed by GFI1. Binds to RNA at the AG dinucleotide at the 3'-splice site. Shows a preference for AGC or AGA. Alternative splicing of U2AF1L4 may play a role in connecting the circadian rhythm to changing external cues: may provide a circadian buffering system in central and periphery clocks that allows synchronized adaption to clock-resetting stimuli in order to prevent potentially pathogenic desynchronization. In Mus musculus (Mouse), this protein is Splicing factor U2AF 26 kDa subunit (U2af1l4).